We begin with the raw amino-acid sequence, 828 residues long: E3 ubiquitin-protein ligase bre-1 (828 aa).

The segment at 1 to 25 (MMKRNNEGIGGEGVANSPPDDTQQK) is disordered. The interval 1-309 (MMKRNNEGIG…SREIEALRAD (309 aa)) is interaction with ubc-1. Coiled-coil stretches lie at residues 53 to 92 (QAAK…FLKV) and 185 to 251 (HKEL…TEKQ). A compositionally biased stretch (low complexity) spans 269–298 (ASGNATASSSATLNQSEKKMGSPGSPPSES). Positions 269–304 (ASGNATASSSATLNQSEKKMGSPGSPPSESTSREIE) are disordered. 3 coiled-coil regions span residues 311 to 345 (DEQA…KMET), 460 to 616 (VNTL…RNLK), and 660 to 756 (DEVL…NDSA). The segment at 776-815 (CPSCKTRPKDCIMLKCYHLFCETCIKTMYDTRQRKCPKCN) adopts an RING-type zinc-finger fold.

This sequence belongs to the BRE1 family. Interacts with ubc-1. Interacts with mrg-1.

Its subcellular location is the nucleus. The catalysed reaction is S-ubiquitinyl-[E2 ubiquitin-conjugating enzyme]-L-cysteine + [acceptor protein]-L-lysine = [E2 ubiquitin-conjugating enzyme]-L-cysteine + N(6)-ubiquitinyl-[acceptor protein]-L-lysine.. The protein operates within protein modification; protein ubiquitination. Functionally, E3 ubiquitin-protein ligase that mediates monoubiquitination of 'Lys-117' of histone H2B. H2B 'Lys-117' ubiquitination gives a specific tag for epigenetic transcriptional activation and is also prerequisite for histone H3 'Lys-4' and 'Lys-79' methylation. Involved in regulating stem cell proliferative fate. This Caenorhabditis briggsae protein is E3 ubiquitin-protein ligase bre-1.